We begin with the raw amino-acid sequence, 640 residues long: Fructose-1,6-bisphosphatase class 3 (640 aa).

This sequence belongs to the FBPase class 3 family. The cofactor is Mn(2+).

It carries out the reaction beta-D-fructose 1,6-bisphosphate + H2O = beta-D-fructose 6-phosphate + phosphate. It functions in the pathway carbohydrate biosynthesis; gluconeogenesis. The chain is Fructose-1,6-bisphosphatase class 3 from Lactococcus lactis subsp. lactis (strain IL1403) (Streptococcus lactis).